The chain runs to 363 residues: dTDP-3-amino-3,6-dideoxy-alpha-D-galactopyranose transaminase (363 aa).

Position 185 is an N6-(pyridoxal phosphate)lysine (Lys185).

Belongs to the DegT/DnrJ/EryC1 family. It depends on pyridoxal 5'-phosphate as a cofactor.

The catalysed reaction is dTDP-3-amino-3,6-dideoxy-alpha-D-galactopyranose + 2-oxoglutarate = dTDP-3-dehydro-6-deoxy-alpha-D-galactose + L-glutamate. Functionally, specifically aminates dTDP-6-deoxy-D-xylohex-3-ulose to form dTDP-D-Fucp3N in the biosynthesis of dTDP-3-acetamido-3,6-dideoxy-alpha-D-galactose, a glycan chain of the S-layer. This chain is dTDP-3-amino-3,6-dideoxy-alpha-D-galactopyranose transaminase (fdtB), found in Aneurinibacillus thermoaerophilus.